The following is a 458-amino-acid chain: Probable ECA polymerase (458 aa).

The next 11 membrane-spanning stretches (helical) occupy residues 3 to 23 (LAQF…VLTL), 37 to 57 (VFFS…TCLL), 65 to 85 (VVPV…YAIY), 112 to 132 (THLT…IFFL), 154 to 174 (GVAL…VYFL), 180 to 200 (AWFF…VIVG), 201 to 221 (GTRA…IVRG), 222 to 242 (WISL…MFWL), 340 to 360 (LVVM…GMII), 377 to 397 (YKAA…IVLA), and 409 to 429 (VFFC…YWLF).

Belongs to the WzyE family. As to quaternary structure, probably part of a complex composed of WzxE, WzyE and WzzE.

Its subcellular location is the cell inner membrane. The protein operates within bacterial outer membrane biogenesis; enterobacterial common antigen biosynthesis. Probably involved in the polymerization of enterobacterial common antigen (ECA) trisaccharide repeat units. This is Probable ECA polymerase from Serratia proteamaculans (strain 568).